The sequence spans 322 residues: Ubiquinone biosynthesis O-methyltransferase, mitochondrial (322 aa).

The transit peptide at 1 to 37 directs the protein to the mitochondrion; that stretch reads MLASVRVNQLQRLLLSARRLSSSPIIPPSRLLHQRLF. A disordered region spans residues 46–75; the sequence is AASFSSSHPKIQTLEGKASNKSRSTSSTTS. Positions 108, 139, 160, and 205 each coordinate S-adenosyl-L-methionine. Residues glutamate 206, glutamate 209, and histidine 210 each contribute to the Mg(2+) site.

The protein belongs to the class I-like SAM-binding methyltransferase superfamily. UbiG/COQ3 family. Component of a multi-subunit COQ enzyme complex. The cofactor is Mg(2+).

It localises to the mitochondrion inner membrane. The enzyme catalyses a 3,4-dihydroxy-5-(all-trans-polyprenyl)benzoate + S-adenosyl-L-methionine = a 4-hydroxy-3-methoxy-5-(all-trans-polyprenyl)benzoate + S-adenosyl-L-homocysteine + H(+). It catalyses the reaction a 3-demethylubiquinone + S-adenosyl-L-methionine = a ubiquinone + S-adenosyl-L-homocysteine. It carries out the reaction a 3-demethylubiquinol + S-adenosyl-L-methionine = a ubiquinol + S-adenosyl-L-homocysteine + H(+). The protein operates within cofactor biosynthesis; ubiquinone biosynthesis. In terms of biological role, O-methyltransferase required for two non-consecutive steps during ubiquinone biosynthesis. Catalyzes the 2 O-methylation of 3,4-dihydroxy-5-(all-trans-polyprenyl)benzoic acid into 4-hydroxy-3-methoxy-5-(all-trans-polyprenyl)benzoic acid. Also catalyzes the last step of ubiquinone biosynthesis by mediating methylation of 3-demethylubiquinone into ubiquinone. Also able to mediate the methylation of 3-demethylubiquinol into ubiquinol. The polypeptide is Ubiquinone biosynthesis O-methyltransferase, mitochondrial (Arabidopsis thaliana (Mouse-ear cress)).